We begin with the raw amino-acid sequence, 183 residues long: UPF0098 protein YbcL (183 aa).

The signal sequence occupies residues 1–21 (MKTLIVSTVLAFITFSAQAAA). Cysteine 46 and cysteine 129 are disulfide-bonded.

This sequence belongs to the UPF0098 family. Homodimer.

It is found in the periplasm. The chain is UPF0098 protein YbcL (ybcL) from Escherichia coli (strain K12).